The primary structure comprises 365 residues: Methylthioribose-1-phosphate isomerase (365 aa).

Residues Arg-53–Ala-55, Arg-90, and Gln-201 contribute to the substrate site. Asp-242 (proton donor) is an active-site residue. Asn-252–Lys-253 is a substrate binding site.

Belongs to the eIF-2B alpha/beta/delta subunits family. MtnA subfamily.

It catalyses the reaction 5-(methylsulfanyl)-alpha-D-ribose 1-phosphate = 5-(methylsulfanyl)-D-ribulose 1-phosphate. The protein operates within amino-acid biosynthesis; L-methionine biosynthesis via salvage pathway; L-methionine from S-methyl-5-thio-alpha-D-ribose 1-phosphate: step 1/6. Functionally, catalyzes the interconversion of methylthioribose-1-phosphate (MTR-1-P) into methylthioribulose-1-phosphate (MTRu-1-P). The polypeptide is Methylthioribose-1-phosphate isomerase (Methylorubrum extorquens (strain CM4 / NCIMB 13688) (Methylobacterium extorquens)).